Consider the following 357-residue polypeptide: Dual-specificity RNA methyltransferase RlmN (357 aa).

E89 serves as the catalytic Proton acceptor. Positions 109 to 340 (EGEKYTVCVS…CTIRESKALD (232 aa)) constitute a Radical SAM core domain. An intrachain disulfide couples C116 to C345. 3 residues coordinate [4Fe-4S] cluster: C123, C127, and C130. S-adenosyl-L-methionine-binding positions include 173-174 (GE), S203, 226-228 (SLH), and N302. C345 functions as the S-methylcysteine intermediate in the catalytic mechanism.

Belongs to the radical SAM superfamily. RlmN family. [4Fe-4S] cluster is required as a cofactor.

The protein resides in the cytoplasm. The catalysed reaction is adenosine(2503) in 23S rRNA + 2 reduced [2Fe-2S]-[ferredoxin] + 2 S-adenosyl-L-methionine = 2-methyladenosine(2503) in 23S rRNA + 5'-deoxyadenosine + L-methionine + 2 oxidized [2Fe-2S]-[ferredoxin] + S-adenosyl-L-homocysteine. It catalyses the reaction adenosine(37) in tRNA + 2 reduced [2Fe-2S]-[ferredoxin] + 2 S-adenosyl-L-methionine = 2-methyladenosine(37) in tRNA + 5'-deoxyadenosine + L-methionine + 2 oxidized [2Fe-2S]-[ferredoxin] + S-adenosyl-L-homocysteine. In terms of biological role, specifically methylates position 2 of adenine 2503 in 23S rRNA and position 2 of adenine 37 in tRNAs. m2A2503 modification seems to play a crucial role in the proofreading step occurring at the peptidyl transferase center and thus would serve to optimize ribosomal fidelity. The chain is Dual-specificity RNA methyltransferase RlmN from Helicobacter pylori (strain G27).